A 265-amino-acid chain; its full sequence is Tryptophan synthase alpha chain (265 aa).

Residues Glu-50 and Asp-61 each act as proton acceptor in the active site.

This sequence belongs to the TrpA family. In terms of assembly, tetramer of two alpha and two beta chains.

The enzyme catalyses (1S,2R)-1-C-(indol-3-yl)glycerol 3-phosphate + L-serine = D-glyceraldehyde 3-phosphate + L-tryptophan + H2O. The protein operates within amino-acid biosynthesis; L-tryptophan biosynthesis; L-tryptophan from chorismate: step 5/5. Functionally, the alpha subunit is responsible for the aldol cleavage of indoleglycerol phosphate to indole and glyceraldehyde 3-phosphate. This Trichodesmium erythraeum (strain IMS101) protein is Tryptophan synthase alpha chain.